The sequence spans 94 residues: Pyrimidine/purine nucleoside phosphorylase (94 aa).

The protein belongs to the nucleoside phosphorylase PpnP family.

The catalysed reaction is a purine D-ribonucleoside + phosphate = a purine nucleobase + alpha-D-ribose 1-phosphate. It carries out the reaction adenosine + phosphate = alpha-D-ribose 1-phosphate + adenine. It catalyses the reaction cytidine + phosphate = cytosine + alpha-D-ribose 1-phosphate. The enzyme catalyses guanosine + phosphate = alpha-D-ribose 1-phosphate + guanine. The catalysed reaction is inosine + phosphate = alpha-D-ribose 1-phosphate + hypoxanthine. It carries out the reaction thymidine + phosphate = 2-deoxy-alpha-D-ribose 1-phosphate + thymine. It catalyses the reaction uridine + phosphate = alpha-D-ribose 1-phosphate + uracil. The enzyme catalyses xanthosine + phosphate = alpha-D-ribose 1-phosphate + xanthine. In terms of biological role, catalyzes the phosphorolysis of diverse nucleosides, yielding D-ribose 1-phosphate and the respective free bases. Can use uridine, adenosine, guanosine, cytidine, thymidine, inosine and xanthosine as substrates. Also catalyzes the reverse reactions. The chain is Pyrimidine/purine nucleoside phosphorylase from Pseudomonas entomophila (strain L48).